A 456-amino-acid polypeptide reads, in one-letter code: Solute carrier family 38 member 6 (456 aa).

Methionine 1 carries the post-translational modification N-acetylmethionine. A phosphoserine mark is found at serine 4 and serine 7. Helical transmembrane passes span 42–62 (SPGV…MGSG), 85–105 (VALL…QTAV), 111–131 (LGLF…IIIQ), 170–190 (LLII…KIGF), and 191–211 (LGYT…VVII). A disulfide bridge links cysteine 218 with cysteine 238. Asparagine 233 is a glycosylation site (N-linked (GlcNAc...) asparagine). Residues 250-270 (AYALPTMAFSFLCHTSILPIY) traverse the membrane as a helical segment. An N-linked (GlcNAc...) asparagine glycan is attached at asparagine 283. 5 helical membrane passes run 288–308 (AIAL…LTFY), 327–347 (VVVM…VPLI), 371–391 (FLIT…VPDI), 394–414 (VFGV…PGLF), and 431–451 (AFVL…LIIF).

This sequence belongs to the amino acid/polyamine transporter 2 family.

It is found in the cell membrane. The protein localises to the synapse. It catalyses the reaction L-glutamine(out) = L-glutamine(in). The enzyme catalyses L-glutamate(out) = L-glutamate(in). Functionally, amino acid transporter with an apparent selectivity for L-glutamine and L-glutamate. May facilitate glutamine uptake in excitatory neurons. The transport mechanism remains to be elucidated. This Homo sapiens (Human) protein is Solute carrier family 38 member 6.